The primary structure comprises 217 residues: MNQTRIDFRQAKFLISAPDIAHLDKHLPGDVGVEIAFAGRSNAGKSSALNALTEQKSLARTSKTPGRTQLINVFELDAQRRLVDLPGYGFAKVPLEMKHKWQNALGEYLQKRACLSGVVVLMDIRHPLKDLDRQMIEWSVASEIPVLALLTKADKLGQSEKMKTVNAVRKELAEFGDWVSVEPFSALKGTGKPKVLAILDAWCHPDWLVEELEQAED.

An EngB-type G domain is found at 31–205; the sequence is VGVEIAFAGR…LAILDAWCHP (175 aa). Residues 39-46, 66-70, 84-87, 151-154, and 184-186 each bind GTP; these read GRSNAGKS, GRTQL, DLPG, TKAD, and FSA. Residues serine 46 and threonine 68 each coordinate Mg(2+).

It belongs to the TRAFAC class TrmE-Era-EngA-EngB-Septin-like GTPase superfamily. EngB GTPase family. Mg(2+) serves as cofactor.

In terms of biological role, necessary for normal cell division and for the maintenance of normal septation. This Shewanella amazonensis (strain ATCC BAA-1098 / SB2B) protein is Probable GTP-binding protein EngB.